Reading from the N-terminus, the 705-residue chain is Complement C1r subcomponent (705 aa).

The signal sequence occupies residues 1–17 (MWLLYLLVPALFCRAGG). Residues 18-141 (SIPIPQKLFG…KGFLAYYQAV (124 aa)) form the CUB 1 domain. Positions 66, 74, and 119 each coordinate Ca(2+). The cysteines at positions 71 and 89 are disulfide-linked. Asn-125 is a glycosylation site (N-linked (GlcNAc...) asparagine). Ca(2+) contacts are provided by Asp-142, Leu-143, and Glu-145. Residues 142 to 190 (DLDECASRSKSGEEDPQPQCQHLCHNYVGGYFCSCRPGYELQEDTHSCQ) form the EGF-like; calcium-binding domain. Intrachain disulfides connect Cys-146–Cys-165, Cys-161–Cys-174, Cys-176–Cys-189, and Cys-193–Cys-220. 3 residues coordinate Ca(2+): Asn-167, Tyr-168, and Gly-171. (3R)-3-hydroxyasparagine is present on Asn-167. One can recognise a CUB 2 domain in the interval 193 to 305 (CSSELYTEAS…RGWKLRYTTE (113 aa)). Ser-206 is subject to Phosphoserine; by CK2. A glycan (N-linked (GlcNAc...) asparagine) is linked at Asn-221. Asp-243, Asp-253, Asp-290, and Asp-294 together coordinate Ca(2+). Cys-250 and Cys-268 form a disulfide bridge. 2 consecutive Sushi domains span residues 307-373 (IKCP…RCKI) and 374-449 (KDCG…RCLP). 5 disulfide bridges follow: Cys-309-Cys-358, Cys-338-Cys-371, Cys-376-Cys-429, Cys-406-Cys-447, and Cys-451-Cys-577. Positions 464–702 (IIGGQKAKMG…YVDWIKKEME (239 aa)) constitute a Peptidase S1 domain. His-502 functions as the Charge relay system in the catalytic mechanism. Asn-514 is a glycosylation site (N-linked (GlcNAc...) asparagine). The active-site Charge relay system is Asp-557. A glycan (N-linked (GlcNAc...) asparagine) is linked at Asn-581. 2 disulfide bridges follow: Cys-620–Cys-639 and Cys-650–Cys-680. Ser-654 functions as the Charge relay system in the catalytic mechanism.

Belongs to the peptidase S1 family. In terms of assembly, core component of the complement C1 complex, a calcium-dependent complex composed of 1 molecule of the C1Q subcomplex, 2 molecules of C1R and 2 molecules of C1S. The C1Q subcomplex is composed 18 subunits: 3 chains of C1QA, C1QB, and C1QC trimerize to form 6 collagen-like triple helices connected to six globular ligand-recognition modules. Within the C1 complex, C1R is a dimer of identical chains, each of which is activated by cleavage into two chains, heavy and light, connected by disulfide bonds. In terms of processing, cleaved and activated by autocatalytic processing to generate Complement C1r subcomponent heavy and light chains that are connected by disulfide bonds. The iron and 2-oxoglutarate dependent 3-hydroxylation of aspartate and asparagine is (R) stereospecific within EGF domains.

It localises to the secreted. The protein resides in the cell surface. The enzyme catalyses Selective cleavage of Lys(or Arg)-|-Ile bond in complement subcomponent C1s to form the active form of C1s (EC 3.4.21.42).. With respect to regulation, activated by the C1Q subcomplex of the C1 complex following C1Q binding to immunoglobulins (IgG or IgM) complexed with antigens to form antigen-antibody complexes on the surface of pathogens. Immunoglobulin-binding promotes autoactivation of C1R, which results in the cleavage of the Arg-Ile bond in the catalytic domain. In terms of biological role, serine protease component of the complement C1 complex, a multiprotein complex that initiates the classical pathway of the complement system, a cascade of proteins that leads to phagocytosis and breakdown of pathogens and signaling that strengthens the adaptive immune system. C1R catalyzes the first enzymatic step in the classical complement pathway: it is activated by the C1Q subcomplex of the C1 complex, which associates with IgG or IgM immunoglobulins complexed with antigens to form antigen-antibody complexes on the surface of pathogens. Immunoglobulin-binding promotes the autocatalytic cleavage and activation of C1R. Activated C1R then cleaves and activates C1S, the second protease of the classical complement pathway. It is unclear if C1R activates C1S within single, strained C1 complexes or between neighboring C1 complexes on surfaces. The sequence is that of Complement C1r subcomponent from Homo sapiens (Human).